The primary structure comprises 442 residues: Trigger factor (442 aa).

Residues 162 to 247 enclose the PPIase FKBP-type domain; it reads GDQVTIDAIG…IKAVHTSEPT (86 aa).

Belongs to the FKBP-type PPIase family. Tig subfamily.

It localises to the cytoplasm. The catalysed reaction is [protein]-peptidylproline (omega=180) = [protein]-peptidylproline (omega=0). In terms of biological role, involved in protein export. Acts as a chaperone by maintaining the newly synthesized protein in an open conformation. Functions as a peptidyl-prolyl cis-trans isomerase. The protein is Trigger factor of Rickettsia canadensis (strain McKiel).